Reading from the N-terminus, the 288-residue chain is Pantothenate synthetase (288 aa).

An ATP-binding site is contributed by 30–37 (MGNLHAGH). His-37 functions as the Proton donor in the catalytic mechanism. Gln-61 provides a ligand contact to (R)-pantoate. Gln-61 serves as a coordination point for beta-alanine. 149–152 (GLKD) contributes to the ATP binding site. Gln-155 provides a ligand contact to (R)-pantoate. ATP-binding positions include Ile-178 and 186–189 (LSSR).

It belongs to the pantothenate synthetase family. As to quaternary structure, homodimer.

The protein localises to the cytoplasm. The catalysed reaction is (R)-pantoate + beta-alanine + ATP = (R)-pantothenate + AMP + diphosphate + H(+). It functions in the pathway cofactor biosynthesis; (R)-pantothenate biosynthesis; (R)-pantothenate from (R)-pantoate and beta-alanine: step 1/1. Catalyzes the condensation of pantoate with beta-alanine in an ATP-dependent reaction via a pantoyl-adenylate intermediate. The protein is Pantothenate synthetase of Colwellia psychrerythraea (strain 34H / ATCC BAA-681) (Vibrio psychroerythus).